Reading from the N-terminus, the 434-residue chain is Calcium uptake protein 2, mitochondrial (434 aa).

The N-terminal 22 residues, 1 to 22 (MAAAAGSCARVAAWGGKLRRGL), are a transit peptide targeting the mitochondrion. The EF-hand 1 domain occupies 172–207 (KPHSGFHVAFKMLDTDGNEMIEKREFFKLQKIISKQ). Residues aspartate 185, aspartate 187, asparagine 189, methionine 191, glutamate 193, and glutamate 196 each contribute to the Ca(2+) site. Phosphoserine is present on serine 205. An EF-hand 2; degenerate domain is found at 227–262 (EPEINTTLQMRFFGKRGQRKLHYKEFRRFMENLQTE). Residues 293–328 (TENKDIYWKNVREKLSAGESISLDEFKSFCHFTTHL) form the EF-hand 3; degenerate domain. The region spanning 362-397 (LSNNILDTVFKIFDLDGDECLSHEEFLGVLKNRMHR) is the EF-hand 4 domain. 5 residues coordinate Ca(2+): aspartate 375, aspartate 377, aspartate 379, cysteine 381, and glutamate 386.

The protein belongs to the MICU1 family. MICU2 subfamily. In terms of assembly, heterodimer; disulfide-linked; heterodimerizes with MICU1. Component of the uniplex complex, composed of MCU, EMRE/SMDT1, MICU1 and MICU2 in a 4:4:1:1 stoichiometry.

It localises to the mitochondrion intermembrane space. The protein resides in the mitochondrion inner membrane. Functionally, calcium sensor of the mitochondrial calcium uniporter (MCU) channel, which senses calcium level via its EF-hand domains. MICU1 and MICU2 form a disulfide-linked heterodimer that stimulates and inhibits MCU activity, depending on the concentration of calcium. At low calcium levels, MICU1 occludes the pore of the MCU channel, preventing mitochondrial calcium uptake. At higher calcium levels, calcium-binding to MICU1 and MICU2 induces a conformational change that weakens MCU-MICU1 interactions and moves the MICU1-MICU2 heterodimer away from the pore, allowing calcium permeation through the MCU channel. This chain is Calcium uptake protein 2, mitochondrial, found in Homo sapiens (Human).